Here is a 218-residue protein sequence, read N- to C-terminus: LOB domain-containing protein 29 (218 aa).

The LOB domain maps to 10–112 (SPCGACKFLR…AELEILKQQA (103 aa)).

This sequence belongs to the LOB domain-containing protein family. Expressed in roots.

Its function is as follows. Involved in lateral root formation. Regulated by the transcriptional activators ARF7 and ARF19. This chain is LOB domain-containing protein 29 (LBD29), found in Arabidopsis thaliana (Mouse-ear cress).